A 284-amino-acid chain; its full sequence is Putative ABC transporter ATP-binding protein tll2439 (284 aa).

The region spanning 6–242 is the ABC transporter domain; that stretch reads LEFHQVGFRY…WPTFAPELGT (237 aa). 40–47 contacts ATP; the sequence is GLNGSGKS.

This sequence belongs to the ABC transporter superfamily.

Its subcellular location is the cell inner membrane. Probably part of an ABC transporter complex. Responsible for energy coupling to the transport system. In Thermosynechococcus vestitus (strain NIES-2133 / IAM M-273 / BP-1), this protein is Putative ABC transporter ATP-binding protein tll2439.